The following is a 132-amino-acid chain: Putative apolipoprotein(a)-like protein 2 (132 aa).

Residues 1 to 21 (MEHKEVVLLLLLFLKSAPTET) form the signal peptide. A Kringle domain is found at 27 to 105 (ECYHSNGQSY…RWEYCNLTRC (79 aa)). 3 disulfides stabilise this stretch: cysteine 28/cysteine 105, cysteine 49/cysteine 88, and cysteine 77/cysteine 100. Asparagine 101 carries N-linked (GlcNAc...) asparagine glycosylation.

In terms of tissue distribution, expressed in liver but not in other tissues tested.

The protein localises to the secreted. The protein is Putative apolipoprotein(a)-like protein 2 (LPAL2) of Homo sapiens (Human).